We begin with the raw amino-acid sequence, 245 residues long: Dehydrogenase/reductase SDR family member 6 (245 aa).

Residues 16-18, Asp-37, and Asp-58 contribute to the NAD(+) site; that span reads QGI. Residue Arg-144 participates in substrate binding. Tyr-147 acts as the Proton acceptor in catalysis. NAD(+)-binding positions include Lys-151 and 180–184; that span reads VDTPS. Arg-188 and Arg-205 together coordinate substrate.

This sequence belongs to the short-chain dehydrogenases/reductases (SDR) family. In terms of assembly, homotetramer.

It is found in the cytoplasm. The enzyme catalyses cis-4-hydroxy-L-proline + NAD(+) = 4-oxo-L-proline + NADH + H(+). The catalysed reaction is (R)-3-hydroxybutanoate + NAD(+) = acetoacetate + NADH + H(+). The protein operates within amino-acid metabolism. Its pathway is siderophore biosynthesis. Functionally, NAD(H)-dependent dehydrogenase/reductase with a preference for cyclic substrates. Catalyzes stereoselective conversion of 4-oxo-L-proline to cis-4-hydroxy-L-proline, likely a detoxification mechanism for ketoprolines. Mediates the formation of 2,5-dihydroxybenzoate (2,5-DHBA), a siderophore that chelates free cytoplasmic iron and associates with LCN2, thereby regulating iron transport and homeostasis while protecting cells against free radical-induced oxidative stress. The iron-siderophore complex is imported into mitochondria, providing an iron source for mitochondrial metabolic processes in particular heme synthesis. May act as a 3-hydroxybutyrate dehydrogenase. This Bos taurus (Bovine) protein is Dehydrogenase/reductase SDR family member 6 (BDH2).